The chain runs to 252 residues: ATP synthase subunit a (252 aa).

A run of 7 helical transmembrane segments spans residues 6 to 26, 31 to 51, 88 to 108, 117 to 137, 144 to 164, 190 to 212, and 225 to 245; these read LEQFAIIQLIPIHIGNLYFSF, LFMLLTISLVLLLVHFVTLNG, FFPLIYVTFTFLLFCNLIGMI, HFIITLGLSFSLFIGITIVGF, FFSILLPQGVPLPLAPFLVLL, LVKILSGFAWTMLSMGGILYLGQ, and LELGVAILQAYVFTILLCIYL.

This sequence belongs to the ATPase A chain family. F-type ATPases have 2 components, CF(1) - the catalytic core - and CF(0) - the membrane proton channel. CF(1) has five subunits: alpha(3), beta(3), gamma(1), delta(1), epsilon(1). CF(0) has three main subunits: a, b and c.

It is found in the mitochondrion inner membrane. Its function is as follows. Mitochondrial membrane ATP synthase (F(1)F(0) ATP synthase or Complex V) produces ATP from ADP in the presence of a proton gradient across the membrane which is generated by electron transport complexes of the respiratory chain. F-type ATPases consist of two structural domains, F(1) - containing the extramembraneous catalytic core and F(0) - containing the membrane proton channel, linked together by a central stalk and a peripheral stalk. During catalysis, ATP synthesis in the catalytic domain of F(1) is coupled via a rotary mechanism of the central stalk subunits to proton translocation. Key component of the proton channel; it may play a direct role in the translocation of protons across the membrane. The protein is ATP synthase subunit a (ATP6) of Marchantia polymorpha (Common liverwort).